We begin with the raw amino-acid sequence, 350 residues long: Protein RecA (350 aa).

68–75 (GPESSGKT) is an ATP binding site.

The protein belongs to the RecA family.

It is found in the cytoplasm. Functionally, can catalyze the hydrolysis of ATP in the presence of single-stranded DNA, the ATP-dependent uptake of single-stranded DNA by duplex DNA, and the ATP-dependent hybridization of homologous single-stranded DNAs. It interacts with LexA causing its activation and leading to its autocatalytic cleavage. This Mycolicibacterium gilvum (strain PYR-GCK) (Mycobacterium gilvum (strain PYR-GCK)) protein is Protein RecA.